We begin with the raw amino-acid sequence, 531 residues long: Peptide chain release factor 3 (531 aa).

The region spanning 10 to 278 (RRRRTFAIIS…SLIDWAPAPK (269 aa)) is the tr-type G domain. GTP is bound by residues 19–26 (SHPDAGKT), 87–91 (DTPGH), and 141–144 (NKYD).

The protein belongs to the TRAFAC class translation factor GTPase superfamily. Classic translation factor GTPase family. PrfC subfamily.

It localises to the cytoplasm. Functionally, increases the formation of ribosomal termination complexes and stimulates activities of RF-1 and RF-2. It binds guanine nucleotides and has strong preference for UGA stop codons. It may interact directly with the ribosome. The stimulation of RF-1 and RF-2 is significantly reduced by GTP and GDP, but not by GMP. The polypeptide is Peptide chain release factor 3 (Neisseria gonorrhoeae (strain NCCP11945)).